We begin with the raw amino-acid sequence, 124 residues long: Ribulose bisphosphate carboxylase small subunit (124 aa).

The protein belongs to the RuBisCO small chain family. Heterohexadecamer of 8 large and 8 small subunits.

RuBisCO catalyzes two reactions: the carboxylation of D-ribulose 1,5-bisphosphate, the primary event in carbon dioxide fixation, as well as the oxidative fragmentation of the pentose substrate. Both reactions occur simultaneously and in competition at the same active site. Although the small subunit is not catalytic it is essential for maximal activity. This is Ribulose bisphosphate carboxylase small subunit from Hydrogenophilus thermoluteolus (Pseudomonas hydrogenothermophila).